Here is a 325-residue protein sequence, read N- to C-terminus: Olfactory receptor 1S1 (325 aa).

The Extracellular portion of the chain corresponds to 1-38 (MKTFSSFLQIGRNMHQGNQTTITEFILLGFFKQDEHQN). N18 carries an N-linked (GlcNAc...) asparagine glycan. The chain crosses the membrane as a helical span at residues 39-62 (LLFVLFLGMYLVTVIGNGLIIVAI). The Cytoplasmic segment spans residues 63–70 (SLDTYLHT). A helical transmembrane segment spans residues 71-92 (PMYLFLANLSFADISSISNSVP). Over 93-113 (KMLVNIQTKSQSISYESCITQ) the chain is Extracellular. Residues C110 and C202 are joined by a disulfide bond. Residues 114 to 133 (MYFSIVFVVIDNLLLGTMAY) traverse the membrane as a helical segment. At 134-152 (DHFVAICHPLNYTILMRPR) the chain is on the cytoplasmic side. The helical transmembrane segment at 153 to 171 (FGILLTVISWFLSNIIALT) threads the bilayer. Residues 172-208 (HTLLLIQLLFCNHNTLPHFFCDLAPLLKLSCSDTLIN) lie on the Extracellular side of the membrane. Residues 209 to 232 (ELVLFIVGLSVIIFPFTLSFFSYV) form a helical membrane-spanning segment. The Cytoplasmic segment spans residues 233–249 (CIIRAVLRVSSTQGKWK). The chain crosses the membrane as a helical span at residues 250–272 (AFSTCGSHLTVVLLFYGTIVGVY). Over 273-285 (FFPSSTHPEDTDK) the chain is Extracellular. Residues 286 to 305 (IGAVLFTVVTPMINPFIYSL) form a helical membrane-spanning segment. Residues 306 to 325 (RNKDMKGALRKLINRKISSL) lie on the Cytoplasmic side of the membrane.

It belongs to the G-protein coupled receptor 1 family.

The protein localises to the cell membrane. Functionally, odorant receptor. The polypeptide is Olfactory receptor 1S1 (OR1S1) (Homo sapiens (Human)).